Here is a 410-residue protein sequence, read N- to C-terminus: MKHPIHVTSEIGELQTVLLKRPGKEVENLTPDYLQQLLFDDIPYLPIIQKEHDYFAQTLRNRGVEVLYLEKLAAEALVDKKLREEFVDRILKEGQADVNVAHQTLKEYLLSFSNEELIQKIMGGVRKNEIETSKKTHLYELMEDHYPFYLDPMPNLYFTRDPAASVGDGLTINKMREPARRRESLFMEYIIKYHPRFAKHNVPIWLDRDYKFPIEGGDELILNEETIAIGVSARTSAKAIERLAKNLFSRQNKIKKVLAIEIPKCRAFMHLDTVFTMVDYDKFTIHPAIQGPKGNMNIYILEKGADEETLKITHRTSLMEALKEVLDLSELVLIPCGGGDVIASAREQWNDGSNTLAIAPGVVVTYDRNYVSNTLLREHGIEVIEVLSSELSRGRGGPRCMSMPIVRKDI.

The active-site Amidino-cysteine intermediate is cysteine 400.

This sequence belongs to the arginine deiminase family.

The protein resides in the cytoplasm. The catalysed reaction is L-arginine + H2O = L-citrulline + NH4(+). It participates in amino-acid degradation; L-arginine degradation via ADI pathway; carbamoyl phosphate from L-arginine: step 1/2. This is Arginine deiminase from Bacillus thuringiensis subsp. konkukian (strain 97-27).